Here is a 599-residue protein sequence, read N- to C-terminus: UvrABC system protein C (599 aa).

Residues 13–91 (NLPGVYRMIN…IKGFMPRYNV (79 aa)) form the GIY-YIG domain. One can recognise a UVR domain in the interval 200 to 235 (QQVMDELGEKMNEAAEKMEYELAAVYRDRIQSLRQV).

It belongs to the UvrC family. As to quaternary structure, interacts with UvrB in an incision complex.

It is found in the cytoplasm. The UvrABC repair system catalyzes the recognition and processing of DNA lesions. UvrC both incises the 5' and 3' sides of the lesion. The N-terminal half is responsible for the 3' incision and the C-terminal half is responsible for the 5' incision. The sequence is that of UvrABC system protein C from Methylobacillus flagellatus (strain ATCC 51484 / DSM 6875 / VKM B-1610 / KT).